Here is a 48-residue protein sequence, read N- to C-terminus: SPbeta prophage-derived uncharacterized protein YotE (48 aa).

This Bacillus subtilis (strain 168) protein is SPbeta prophage-derived uncharacterized protein YotE (yotE).